Reading from the N-terminus, the 291-residue chain is NAD kinase (291 aa).

D73 serves as the catalytic Proton acceptor. NAD(+) is bound by residues 73–74 (DG), 147–148 (ND), R175, D177, and Q246.

The protein belongs to the NAD kinase family. It depends on a divalent metal cation as a cofactor.

It is found in the cytoplasm. It catalyses the reaction NAD(+) + ATP = ADP + NADP(+) + H(+). Involved in the regulation of the intracellular balance of NAD and NADP, and is a key enzyme in the biosynthesis of NADP. Catalyzes specifically the phosphorylation on 2'-hydroxyl of the adenosine moiety of NAD to yield NADP. The chain is NAD kinase from Chromobacterium violaceum (strain ATCC 12472 / DSM 30191 / JCM 1249 / CCUG 213 / NBRC 12614 / NCIMB 9131 / NCTC 9757 / MK).